A 370-amino-acid polypeptide reads, in one-letter code: Protein Mut11 (370 aa).

Residues 1 to 22 form a disordered region; that stretch reads MARGPGDTDMDEASADAAIPSS. WD repeat units lie at residues 38-77, 80-119, 122-162, 165-204, 208-247, 262-301, and 329-370; these read GHTK…RVNT, GHSC…CLRT, GHTN…CLRE, AHSD…CLKT, RDSP…TRRT, GFLG…VVGR, and GHTA…PAAA.

This sequence belongs to the WD repeat WDR5/wds family.

It localises to the nucleus. Its function is as follows. Part of a complex involved in 'Lys-4' histone H3 methylation. This chain is Protein Mut11 (Mut11), found in Chlamydomonas reinhardtii (Chlamydomonas smithii).